Here is a 281-residue protein sequence, read N- to C-terminus: Penicillin-insensitive murein endopeptidase (281 aa).

An N-terminal signal peptide occupies residues 1 to 24 (MKQGLIGVLALALGATLLSSAVWA). Disulfide bonds link C49–C270, C192–C240, and C221–C228. The Zn(2+) site is built by H115, H118, D125, and H216. Residues 230-271 (EQSEPPIGDGCGAELTSWFQPKQPSSEAPEKTTPPPLPPSCQ) are disordered. Over residues 246–255 (SWFQPKQPSS) the composition is skewed to polar residues.

Belongs to the peptidase M74 family. As to quaternary structure, dimer. Zn(2+) serves as cofactor.

It localises to the periplasm. Murein endopeptidase that cleaves the D-alanyl-meso-2,6-diamino-pimelyl amide bond that connects peptidoglycan strands. Likely plays a role in the removal of murein from the sacculus. The polypeptide is Penicillin-insensitive murein endopeptidase (mepA) (Pectobacterium atrosepticum (strain SCRI 1043 / ATCC BAA-672) (Erwinia carotovora subsp. atroseptica)).